Reading from the N-terminus, the 222-residue chain is DNA ADP-ribosyl transferase (222 aa).

The DarT domain occupies 12–209; sequence TLIYHITHLN…PVRVRRSWYY (198 aa). Residues 16–18, Gly-25, and Leu-33 contribute to the NAD(+) site; that span reads HIT. The tract at residues 38–56 is NAD(+)-binding element; that stretch reads RPPTQQNVAYGHIQAHRAQ. Residues 47-53 mediate DNA binding; that stretch reads YGHIQAH. Residue Arg-54 participates in NAD(+) binding. The active-site Proton acceptor is Arg-54. 3 DNA-binding regions span residues 78–83, 148–151, and 154–158; these read RSPMLY, SYWA, and REKKQ. The ADP-ribosylating turn-turn loop stretch occupies residues 119 to 160; sequence TDRHAAVQYVCFFHKLEHLKALDWQAIQASYWANVREKKQAE. The active site involves Glu-160.

Belongs to the DarT ADP-ribosyltransferase family. In terms of assembly, interacts with cognate antitoxin DarG (via C-terminus); this heterodimeric complex neutralizes the toxic effect of DarT by preventing ssDNA binding to DarT and consequently inactivating the toxin by direct protein-protein interactions.

The enzyme catalyses a thymidine in DNA + NAD(+) = an N-(ADP-alpha-D-ribosyl)-thymidine in DNA + nicotinamide + H(+). In terms of biological role, toxic component of the hybrid type II/IV toxin-antitoxin (TA) system DarTG, which plays a crucial role in controlling bacterial growth and bacteriophage infection. Its toxic effect is neutralized by cognate antitoxin DarG. In case of phage infection, DarT toxin ADP-ribosylates DNA, which inhibits both viral DNA and RNA synthesis and leads to abortive infection. ADP-ribosylates ssDNA on the second thymidine of the consensus sequence 5'-TNTC-3'; the protein does not auto-modify. Has no activity on dsDNA in vitro. This leads to a decrease in DNA replication. Upon expression in E.coli inhibits cell growth, colony formation and induces the SOS response. Expression leads to bacteriostasis; however if cells grow over an hour in the presence of toxin, growth is no longer restored on antitoxin-inducing plates. In E.coli ADP-ribosylates genomic DNA (gDNA), which induces RecA expression (a marker for DNA damage). The chain is DNA ADP-ribosyl transferase from Thermus aquaticus (strain ATCC BAA-2747 / Y51MC23).